A 103-amino-acid polypeptide reads, in one-letter code: Colicin-V (103 aa).

The propeptide occupies 1–15 (MRTLTLNELDSVSGG). Cys91 and Cys102 are oxidised to a cystine.

Its subcellular location is the secreted. Colicin V kills sensitive cells by disrupting the membrane potential. In terms of biological role, colicins are polypeptide toxins produced by, and active against E.coli and closely related bacteria. The polypeptide is Colicin-V (cvaC) (Escherichia coli).